Here is a 208-residue protein sequence, read N- to C-terminus: NAD(P)H dehydrogenase (quinone) (208 aa).

The 189-residue stretch at 4–192 folds into the Flavodoxin-like domain; that stretch reads VLVLYYSSYG…DGARFQGRHV (189 aa). Residues 10 to 15 and 78 to 80 contribute to the FMN site; these read SSYGHV and TRF. An NAD(+)-binding site is contributed by Tyr12. Position 98 (Trp98) interacts with substrate. FMN-binding positions include 113–119 and His134; that span reads STGSQHG. Positions 161–183 are disordered; that stretch reads YGASTLADDGDGGDRQPSANELD.

The protein belongs to the WrbA family. FMN serves as cofactor.

It catalyses the reaction a quinone + NADH + H(+) = a quinol + NAD(+). It carries out the reaction a quinone + NADPH + H(+) = a quinol + NADP(+). The sequence is that of NAD(P)H dehydrogenase (quinone) from Paracoccus denitrificans (strain Pd 1222).